A 71-amino-acid polypeptide reads, in one-letter code: uncharacterized protein (71 aa).

This is an uncharacterized protein from Dictyostelium discoideum (Social amoeba).